Here is a 243-residue protein sequence, read N- to C-terminus: Adenosylcobinamide-GDP ribazoletransferase (243 aa).

Helical transmembrane passes span 31–51 (LLFY…FNTL), 55–75 (APLM…SGGL), 109–129 (IAVV…LALI), 133–153 (ASVW…GLFL), and 188–208 (VLLA…CFFW).

It belongs to the CobS family. Mg(2+) serves as cofactor.

The protein localises to the cell inner membrane. It carries out the reaction alpha-ribazole + adenosylcob(III)inamide-GDP = adenosylcob(III)alamin + GMP + H(+). It catalyses the reaction alpha-ribazole 5'-phosphate + adenosylcob(III)inamide-GDP = adenosylcob(III)alamin 5'-phosphate + GMP + H(+). It participates in cofactor biosynthesis; adenosylcobalamin biosynthesis; adenosylcobalamin from cob(II)yrinate a,c-diamide: step 7/7. In terms of biological role, joins adenosylcobinamide-GDP and alpha-ribazole to generate adenosylcobalamin (Ado-cobalamin). Also synthesizes adenosylcobalamin 5'-phosphate from adenosylcobinamide-GDP and alpha-ribazole 5'-phosphate. This Pseudomonas syringae pv. syringae (strain B728a) protein is Adenosylcobinamide-GDP ribazoletransferase.